We begin with the raw amino-acid sequence, 297 residues long: Acetyl-coenzyme A carboxylase carboxyl transferase subunit beta (297 aa).

Residues 27–296 enclose the CoA carboxyltransferase N-terminal domain; the sequence is LWHKCPSCEA…PEQAREAAAV (270 aa). Residues cysteine 31, cysteine 34, cysteine 50, and cysteine 53 each coordinate Zn(2+). The segment at 31–53 adopts a C4-type zinc-finger fold; the sequence is CPSCEAVLYRPELEKTLDVCPKC.

This sequence belongs to the AccD/PCCB family. As to quaternary structure, acetyl-CoA carboxylase is a heterohexamer composed of biotin carboxyl carrier protein (AccB), biotin carboxylase (AccC) and two subunits each of ACCase subunit alpha (AccA) and ACCase subunit beta (AccD). It depends on Zn(2+) as a cofactor.

It is found in the cytoplasm. The catalysed reaction is N(6)-carboxybiotinyl-L-lysyl-[protein] + acetyl-CoA = N(6)-biotinyl-L-lysyl-[protein] + malonyl-CoA. Its pathway is lipid metabolism; malonyl-CoA biosynthesis; malonyl-CoA from acetyl-CoA: step 1/1. Its function is as follows. Component of the acetyl coenzyme A carboxylase (ACC) complex. Biotin carboxylase (BC) catalyzes the carboxylation of biotin on its carrier protein (BCCP) and then the CO(2) group is transferred by the transcarboxylase to acetyl-CoA to form malonyl-CoA. The polypeptide is Acetyl-coenzyme A carboxylase carboxyl transferase subunit beta (Pseudomonas putida (strain GB-1)).